Consider the following 785-residue polypeptide: E3 UFM1-protein ligase 1 homolog (785 aa).

The segment at 404–482 is disordered; the sequence is NASFQDQDDD…AGGGGGNKKT (79 aa).

Belongs to the UFL1 family.

E3 UFM1-protein ligase that mediates ufmylation of target proteins. The protein is E3 UFM1-protein ligase 1 homolog of Drosophila persimilis (Fruit fly).